Here is a 280-residue protein sequence, read N- to C-terminus: Phosphatidylserine decarboxylase proenzyme (280 aa).

Catalysis depends on charge relay system; for autoendoproteolytic cleavage activity residues aspartate 86, histidine 143, and serine 246. Serine 246 functions as the Schiff-base intermediate with substrate; via pyruvic acid; for decarboxylase activity in the catalytic mechanism. The residue at position 246 (serine 246) is a Pyruvic acid (Ser); by autocatalysis.

Belongs to the phosphatidylserine decarboxylase family. PSD-B subfamily. Prokaryotic type I sub-subfamily. In terms of assembly, heterodimer of a large membrane-associated beta subunit and a small pyruvoyl-containing alpha subunit. Pyruvate serves as cofactor. Is synthesized initially as an inactive proenzyme. Formation of the active enzyme involves a self-maturation process in which the active site pyruvoyl group is generated from an internal serine residue via an autocatalytic post-translational modification. Two non-identical subunits are generated from the proenzyme in this reaction, and the pyruvate is formed at the N-terminus of the alpha chain, which is derived from the carboxyl end of the proenzyme. The autoendoproteolytic cleavage occurs by a canonical serine protease mechanism, in which the side chain hydroxyl group of the serine supplies its oxygen atom to form the C-terminus of the beta chain, while the remainder of the serine residue undergoes an oxidative deamination to produce ammonia and the pyruvoyl prosthetic group on the alpha chain. During this reaction, the Ser that is part of the protease active site of the proenzyme becomes the pyruvoyl prosthetic group, which constitutes an essential element of the active site of the mature decarboxylase.

It is found in the cell membrane. The enzyme catalyses a 1,2-diacyl-sn-glycero-3-phospho-L-serine + H(+) = a 1,2-diacyl-sn-glycero-3-phosphoethanolamine + CO2. Its pathway is phospholipid metabolism; phosphatidylethanolamine biosynthesis; phosphatidylethanolamine from CDP-diacylglycerol: step 2/2. Functionally, catalyzes the formation of phosphatidylethanolamine (PtdEtn) from phosphatidylserine (PtdSer). The sequence is that of Phosphatidylserine decarboxylase proenzyme from Brevibacillus brevis (strain 47 / JCM 6285 / NBRC 100599).